The following is a 608-amino-acid chain: 1-phosphatidylinositol 4,5-bisphosphate phosphodiesterase zeta-1 (608 aa).

Residues 35–70 (CSYIHVKQIFKDNDRLKQGRITIEEFRAIYRIITHR) enclose the EF-hand domain. The region spanning 155-299 (QDMTHPLNDY…LKFKILVKNK (145 aa)) is the PI-PLC X-box domain. Active-site residues include His170 and His215. Residues 305-324 (KETHERKGSDKRGDNQDKET) are disordered. In terms of domain architecture, PI-PLC Y-box spans 349–465 (LSDLVIYTKA…GYILKPHFLR (117 aa)). The C2 domain occupies 465–589 (RESKSYFNPS…KGYRRIPLFS (125 aa)).

As to quaternary structure, interacts via its C2 domain with PtdIns(3)P and, to a lesser extent, PtdIns(5)P in vitro. The cofactor is Ca(2+). Expressed specifically in testis and sperm. Weakly expressed in pancreatic-duct cells. Up-regulated in pancreatic-duct cells from patients with cystic fibrosis.

It is found in the nucleus. The protein localises to the cytoplasm. Its subcellular location is the perinuclear region. The catalysed reaction is a 1,2-diacyl-sn-glycero-3-phospho-(1D-myo-inositol-4,5-bisphosphate) + H2O = 1D-myo-inositol 1,4,5-trisphosphate + a 1,2-diacyl-sn-glycerol + H(+). The production of the second messenger molecules diacylglycerol (DAG) and inositol 1,4,5-trisphosphate (IP3) is mediated by activated phosphatidylinositol-specific phospholipase C enzymes. In vitro, hydrolyzes PtdIns(4,5)P2 in a Ca(2+)-dependent manner. Triggers intracellular Ca(2+) oscillations in oocytes solely during M phase and is involved in inducing oocyte activation and initiating embryonic development up to the blastocyst stage. Is therefore a strong candidate for the egg-activating soluble sperm factor that is transferred from the sperm into the egg cytoplasm following gamete membrane fusion. May exert an inhibitory effect on phospholipase-C-coupled processes that depend on calcium ions and protein kinase C, including CFTR trafficking and function. The sequence is that of 1-phosphatidylinositol 4,5-bisphosphate phosphodiesterase zeta-1 from Homo sapiens (Human).